The following is a 379-amino-acid chain: MTSETSVNLLDFDAEGLVAYCGSLGEKPFRAKQLQRWIHQYNAGDFDGMTDLAKSLREKLKGRASIVMPEIASDHVSADGTRKWLIDVGNGNAVETVFIPEETRGTLCVSSQAGCAVNCRFCSTGKQGFSRNLSTAEIIGQLRMAEFALRASLGRAPGPNGKAERVVTNVVMMGMGEPLLNYNAVVPAMRLMLDDNAYGLSRRRVTLSTSGVVPMMDRLGAELPVALAVSLHAPNDALRDELVPLNKKHPLRELMAACQRYLKVAPRDFITFEYCMLDGVNDTEAHARELLAVTRDVPCKFNLIPFNPFPESGLIRSKPEQIKRFAQVLIDAGVVTTVRKTRGDDIDAACGQLAGAVKDRTRLAERTGAAAKIIEVRAI.

Glu-95 functions as the Proton acceptor in the catalytic mechanism. A Radical SAM core domain is found at 101-345 (EETRGTLCVS…TTVRKTRGDD (245 aa)). Cys-108 and Cys-350 form a disulfide bridge. Positions 115, 119, and 122 each coordinate [4Fe-4S] cluster. Residues 176–177 (GE), Ser-208, 230–232 (SLH), and Asn-307 contribute to the S-adenosyl-L-methionine site. Cys-350 (S-methylcysteine intermediate) is an active-site residue.

This sequence belongs to the radical SAM superfamily. RlmN family. Requires [4Fe-4S] cluster as cofactor.

The protein localises to the cytoplasm. The enzyme catalyses adenosine(2503) in 23S rRNA + 2 reduced [2Fe-2S]-[ferredoxin] + 2 S-adenosyl-L-methionine = 2-methyladenosine(2503) in 23S rRNA + 5'-deoxyadenosine + L-methionine + 2 oxidized [2Fe-2S]-[ferredoxin] + S-adenosyl-L-homocysteine. It carries out the reaction adenosine(37) in tRNA + 2 reduced [2Fe-2S]-[ferredoxin] + 2 S-adenosyl-L-methionine = 2-methyladenosine(37) in tRNA + 5'-deoxyadenosine + L-methionine + 2 oxidized [2Fe-2S]-[ferredoxin] + S-adenosyl-L-homocysteine. In terms of biological role, specifically methylates position 2 of adenine 2503 in 23S rRNA and position 2 of adenine 37 in tRNAs. m2A2503 modification seems to play a crucial role in the proofreading step occurring at the peptidyl transferase center and thus would serve to optimize ribosomal fidelity. In Burkholderia ambifaria (strain MC40-6), this protein is Dual-specificity RNA methyltransferase RlmN.